The chain runs to 328 residues: Dolichyl-diphosphooligosaccharide--protein glycosyltransferase subunit MAGT1 (328 aa).

The signal sequence occupies residues 1–22 (MLHKLLIVVFLVVCLHDMRLNG). At 23 to 177 (QKKKETLLSE…DVHIRVIRPP (155 aa)) the chain is on the extracellular side. The Thioredoxin domain occupies 40–168 (WVSKRAVVRL…LARWVADRTD (129 aa)). N64 carries an N-linked (GlcNAc...) asparagine glycan. An intrachain disulfide couples C80 to C83. Residues 178 to 198 (NYAGPLMLGLLLAFIGSLAYL) form a helical membrane-spanning segment. The Cytoplasmic segment spans residues 199-202 (RRNN). A helical membrane pass occupies residues 203–223 (LEFLFNKNVWAFSALCFVLIM). Residues 224-257 (TSGQMWNHIRGPPYAHKNPNTGQVSYIHGSSQAQ) lie on the Extracellular side of the membrane. The helical transmembrane segment at 258-278 (FVAETHIVLLFNAAVTIGMVL) threads the bilayer. Over 279 to 293 (LHEAATSGLDIVKRK) the chain is Cytoplasmic. Residues 294 to 314 (IMCVAGIGLVVLFFSWLLSVF) form a helical membrane-spanning segment. The Extracellular portion of the chain corresponds to 315-328 (RAKYHGYPYSFLFG).

The protein belongs to the OST3/OST6 family. As to quaternary structure, accessory component of the STT3B-containing form of the oligosaccharyltransferase (OST) complex.

It localises to the cell membrane. It is found in the endoplasmic reticulum. The protein resides in the endoplasmic reticulum membrane. Its pathway is protein modification; protein glycosylation. In terms of biological role, accessory component of the STT3B-containing form of the N-oligosaccharyl transferase (OST) complex which catalyzes the transfer of a high mannose oligosaccharide from a lipid-linked oligosaccharide donor to an asparagine residue within an Asn-X-Ser/Thr consensus motif in nascent polypeptide chains. Involved in N-glycosylation of STT3B-dependent substrates. Specifically required for the glycosylation of a subset of acceptor sites that are near cysteine residues; in this function seems to act redundantly with TUSC3. In its oxidized form proposed to form transient mixed disulfides with a glycoprotein substrate to facilitate access of STT3B to the unmodified acceptor site. Also has oxidoreductase-independent functions in the STT3B-containing OST complex possibly involving substrate recognition. Could indirectly play a role in Mg(2+) transport. This is Dolichyl-diphosphooligosaccharide--protein glycosyltransferase subunit MAGT1 from Danio rerio (Zebrafish).